Reading from the N-terminus, the 157-residue chain is Crossover junction endodeoxyribonuclease RuvC (157 aa).

Residues Asp7, Glu70, and Asp142 contribute to the active site. 3 residues coordinate Mg(2+): Asp7, Glu70, and Asp142.

This sequence belongs to the RuvC family. In terms of assembly, homodimer which binds Holliday junction (HJ) DNA. The HJ becomes 2-fold symmetrical on binding to RuvC with unstacked arms; it has a different conformation from HJ DNA in complex with RuvA. In the full resolvosome a probable DNA-RuvA(4)-RuvB(12)-RuvC(2) complex forms which resolves the HJ. Mg(2+) is required as a cofactor.

The protein localises to the cytoplasm. The catalysed reaction is Endonucleolytic cleavage at a junction such as a reciprocal single-stranded crossover between two homologous DNA duplexes (Holliday junction).. Functionally, the RuvA-RuvB-RuvC complex processes Holliday junction (HJ) DNA during genetic recombination and DNA repair. Endonuclease that resolves HJ intermediates. Cleaves cruciform DNA by making single-stranded nicks across the HJ at symmetrical positions within the homologous arms, yielding a 5'-phosphate and a 3'-hydroxyl group; requires a central core of homology in the junction. The consensus cleavage sequence is 5'-(A/T)TT(C/G)-3'. Cleavage occurs on the 3'-side of the TT dinucleotide at the point of strand exchange. HJ branch migration catalyzed by RuvA-RuvB allows RuvC to scan DNA until it finds its consensus sequence, where it cleaves and resolves the cruciform DNA. This Synechococcus sp. (strain RCC307) protein is Crossover junction endodeoxyribonuclease RuvC.